The following is a 78-amino-acid chain: Translation initiation factor IF-1, chloroplastic (78 aa).

An S1-like domain is found at 1–72 (MEKQKLIDME…TKGRITYRLR (72 aa)).

Belongs to the IF-1 family. As to quaternary structure, component of the 30S ribosomal translation pre-initiation complex which assembles on the 30S ribosome in the order IF-2 and IF-3, IF-1 and N-formylmethionyl-tRNA(fMet); mRNA recruitment can occur at any time during PIC assembly.

The protein resides in the plastid. It is found in the chloroplast. Functionally, one of the essential components for the initiation of protein synthesis. Stabilizes the binding of IF-2 and IF-3 on the 30S subunit to which N-formylmethionyl-tRNA(fMet) subsequently binds. Helps modulate mRNA selection, yielding the 30S pre-initiation complex (PIC). Upon addition of the 50S ribosomal subunit IF-1, IF-2 and IF-3 are released leaving the mature 70S translation initiation complex. The sequence is that of Translation initiation factor IF-1, chloroplastic from Marchantia polymorpha (Common liverwort).